Here is a 368-residue protein sequence, read N- to C-terminus: V-type proton ATPase subunit C (368 aa).

It belongs to the V-ATPase C subunit family. V-ATPase is a heteromultimeric enzyme composed of a peripheral catalytic V1 complex (components A to H) attached to an integral membrane V0 proton pore complex (components: a, c, c', c'' and d).

Its function is as follows. Subunit of the peripheral V1 complex of vacuolar ATPase. Subunit C is necessary for the assembly of the catalytic sector of the enzyme and is likely to have a specific function in its catalytic activity. V-ATPase is responsible for acidifying a variety of intracellular compartments in eukaryotic cells. This chain is V-type proton ATPase subunit C (vatC), found in Dictyostelium discoideum (Social amoeba).